The sequence spans 198 residues: MYEYIKGEYMGINKDYIIIENNGIGYKIFTSGATMSSMPCCGEKIKLYIEQIVREDFIGLYGFESLEELEMFKMLLSINGVGAKAALSLLSISRLNNLKYAIITGDEKHLCRGVGIGKKTAARIILELKDKLKTDELLNCIDEFDDVTQDNSLAVSEALSALISLGYTEKEAEKVLRDVDKSESVENIIKSALVKLMG.

Residues 1 to 64 (MYEYIKGEYM…EDFIGLYGFE (64 aa)) are domain I. The segment at 65–143 (SLEELEMFKM…TDELLNCIDE (79 aa)) is domain II. The interval 144–154 (FDDVTQDNSLA) is flexible linker. A domain III region spans residues 154–198 (AVSEALSALISLGYTEKEAEKVLRDVDKSESVENIIKSALVKLMG).

The protein belongs to the RuvA family. Homotetramer. Forms an RuvA(8)-RuvB(12)-Holliday junction (HJ) complex. HJ DNA is sandwiched between 2 RuvA tetramers; dsDNA enters through RuvA and exits via RuvB. An RuvB hexamer assembles on each DNA strand where it exits the tetramer. Each RuvB hexamer is contacted by two RuvA subunits (via domain III) on 2 adjacent RuvB subunits; this complex drives branch migration. In the full resolvosome a probable DNA-RuvA(4)-RuvB(12)-RuvC(2) complex forms which resolves the HJ.

The protein resides in the cytoplasm. The RuvA-RuvB-RuvC complex processes Holliday junction (HJ) DNA during genetic recombination and DNA repair, while the RuvA-RuvB complex plays an important role in the rescue of blocked DNA replication forks via replication fork reversal (RFR). RuvA specifically binds to HJ cruciform DNA, conferring on it an open structure. The RuvB hexamer acts as an ATP-dependent pump, pulling dsDNA into and through the RuvAB complex. HJ branch migration allows RuvC to scan DNA until it finds its consensus sequence, where it cleaves and resolves the cruciform DNA. This chain is Holliday junction branch migration complex subunit RuvA, found in Clostridium botulinum (strain Eklund 17B / Type B).